Consider the following 310-residue polypeptide: MALTLSLNTNPLVNRFAEPDDLIETVARDLRLRDLQLTHEFINPSWQASTIRRLTRDMDRALQRTGVRVTSGMTGPYGRLNHFGHPDRDVRRYYVDWFKTFADIIGDLGGKSVGTQFAIFTYKDFDDPARREELIKIAIDCWAEVAEHAAGAGLDYVFWEPMSIGREFGETIAECMKLQDRLTAANMAIPMWMMADIDHGDVTSANPDDYDPYAWARTVPKVSPIIHIKQSLMDKGGHRPFTAAFNAKGRIQPEPLLKAFAEGGAVDNEICLELSFKEREPNDREVIPQIAESVAFWAPHIDTGAKDLKI.

It catalyses the reaction D-erythrulose 1-phosphate = L-erythrulose 1-phosphate. The protein operates within carbohydrate metabolism; erythritol degradation. Its function is as follows. Catalyzes the racemization of D-erythrulose 1-phosphate to L-erythrulose 1-phosphate. The chain is D-erythrulose 1-phosphate 3-epimerase from Brucella abortus (strain 2308).